A 172-amino-acid polypeptide reads, in one-letter code: MLLLCHILAVTILQILIISENWVFAKNINFYNVRPPLDPTPFPNSFKCFTCENAGDNYNCNRWAEDKWCPQDTQYCLTVHHFTSHGRSTSITKKCASKNECHFVGCRHSRDSEHTECRSCCEGMICNVELPTNHTNAVFAVMHAQRTSGSSVSSVPSPYLLVLAWLFMLPLL.

An N-terminal signal peptide occupies residues M1–A25. The 92-residue stretch at F46–A137 folds into the UPAR/Ly6 domain. The segment at F46–A140 is sufficient for inhibiting alpha-7 nAChR currents. 6 disulfide bridges follow: C48–C76, C51–C60, C69–C95, C101–C120, C106–C117, and C121–C126. A lipid anchor (GPI-anchor amidated serine) is attached at S148. Residues G149–L172 constitute a propeptide, removed in mature form.

The protein resides in the cell membrane. In terms of biological role, likely acts as a modulator of nicotinic acetylcholine receptors (nAChRs) activity. In vitro acts on nAChRs in a subtype- and stoichiometry-dependent manner. Modulates specifically alpha-3(3):beta-4(2) nAChRs by enhancing the sensitivity to ACh, decreasing ACh-induced maximal current response and increasing the rate of desensitization to ACh; has no effect on alpha-7 homomeric nAChRs; modulates alpha-3(2):alpha-5:beta-4(2) nAChRs in the context of CHRNA5/alpha-5 variant Asn-398 but not its wild-type sequence. However, according to another report in vitro it can weakly inhibits alpha-7 nAChRs. The chain is Ly6/PLAUR domain-containing protein 6B (Lypd6b) from Mus musculus (Mouse).